The chain runs to 150 residues: MIRILGEGKGSNLLEDVKEKLEEIVKKEIGDVHVNVILVSEDEIKELNQQFRSHDQPTDVLTFLLMEEDVYGEIYVCPMIVEENAKEFSNTFEKELLEVVIHGILHLAGYDHEFEDRKSKEMFEKQKKYVEEVWGEWRSDPSEDSGPGKR.

3 residues coordinate Zn(2+): His102, His106, and His112.

This sequence belongs to the endoribonuclease YbeY family. Zn(2+) serves as cofactor.

The protein resides in the cytoplasm. In terms of biological role, single strand-specific metallo-endoribonuclease involved in late-stage 70S ribosome quality control and in maturation of the 3' terminus of the 16S rRNA. This chain is Endoribonuclease YbeY, found in Thermotoga petrophila (strain ATCC BAA-488 / DSM 13995 / JCM 10881 / RKU-1).